The sequence spans 148 residues: Oleosin 1 (148 aa).

An N-acetylalanine modification is found at A2. Residues 2–28 (ADQHFQQPLHFQGSYGQQQPRSYQVAK) form a polar region. The segment at 29-148 (AATAVTAGGS…HVPSGQQQSS (120 aa)) is hydrophobic. A run of 2 helical transmembrane segments spans residues 37–57 (GSLLVLSGLVLAGTVIALTIA) and 81–101 (GFLTSGGFGVAAVTVLSWIYK).

The protein belongs to the oleosin family.

Its subcellular location is the lipid droplet. It localises to the membrane. In terms of biological role, may have a structural role to stabilize the lipid body during desiccation of the seed by preventing coalescence of the oil. Probably interacts with both lipid and phospholipid moieties of lipid bodies. May also provide recognition signals for specific lipase anchorage in lipolysis during seedling growth. In Prunus dulcis (Almond), this protein is Oleosin 1 (OLE1).